Here is a 314-residue protein sequence, read N- to C-terminus: tRNA-cytidine(32) 2-sulfurtransferase (314 aa).

A PP-loop motif motif is present at residues 49–54 (SGGKDS). 3 residues coordinate [4Fe-4S] cluster: C124, C127, and C215.

The protein belongs to the TtcA family. As to quaternary structure, homodimer. It depends on Mg(2+) as a cofactor. [4Fe-4S] cluster serves as cofactor.

The protein resides in the cytoplasm. The catalysed reaction is cytidine(32) in tRNA + S-sulfanyl-L-cysteinyl-[cysteine desulfurase] + AH2 + ATP = 2-thiocytidine(32) in tRNA + L-cysteinyl-[cysteine desulfurase] + A + AMP + diphosphate + H(+). It functions in the pathway tRNA modification. Its function is as follows. Catalyzes the ATP-dependent 2-thiolation of cytidine in position 32 of tRNA, to form 2-thiocytidine (s(2)C32). The sulfur atoms are provided by the cysteine/cysteine desulfurase (IscS) system. This chain is tRNA-cytidine(32) 2-sulfurtransferase, found in Histophilus somni (strain 2336) (Haemophilus somnus).